Here is a 139-residue protein sequence, read N- to C-terminus: MGGVKHLNEHEETLLLNELIKRGFKIYVKTRMGKKEVVSIKAEKGLVITRTSDGMEIIEAPKNFQRREFIIKPRYPEPNPVAGSSEIYKLLSTKKEIIYREEKVTRVELVNNNLILETDKGHIYILTPSSLFEYPIYTW.

This is an uncharacterized protein from Saccharolobus islandicus (Sulfolobus islandicus).